Here is a 663-residue protein sequence, read N- to C-terminus: DNA topoisomerase 1 (663 aa).

A Toprim domain is found at S4–S137. Positions 10 and 106 each coordinate Mg(2+). Residues D155–L558 form the Topo IA-type catalytic domain. Positions S193–Q198 are interaction with DNA. Y306 serves as the catalytic O-(5'-phospho-DNA)-tyrosine intermediate. The C4-type 1 zinc-finger motif lies at C583 to C610. The C4-type 2; atypical zinc-finger motif lies at C629 to C653.

The protein belongs to the type IA topoisomerase family. As to quaternary structure, monomer. Mg(2+) serves as cofactor.

The catalysed reaction is ATP-independent breakage of single-stranded DNA, followed by passage and rejoining.. Releases the supercoiling and torsional tension of DNA, which is introduced during the DNA replication and transcription, by transiently cleaving and rejoining one strand of the DNA duplex. Introduces a single-strand break via transesterification at a target site in duplex DNA. The scissile phosphodiester is attacked by the catalytic tyrosine of the enzyme, resulting in the formation of a DNA-(5'-phosphotyrosyl)-enzyme intermediate and the expulsion of a 3'-OH DNA strand. The free DNA strand then undergoes passage around the unbroken strand, thus removing DNA supercoils. Finally, in the religation step, the DNA 3'-OH attacks the covalent intermediate to expel the active-site tyrosine and restore the DNA phosphodiester backbone. This is DNA topoisomerase 1 from Archaeoglobus fulgidus (strain ATCC 49558 / DSM 4304 / JCM 9628 / NBRC 100126 / VC-16).